The primary structure comprises 172 residues: Large ribosomal subunit protein uL10 (172 aa).

Belongs to the universal ribosomal protein uL10 family. Part of the ribosomal stalk of the 50S ribosomal subunit. The N-terminus interacts with L11 and the large rRNA to form the base of the stalk. The C-terminus forms an elongated spine to which L12 dimers bind in a sequential fashion forming a multimeric L10(L12)X complex.

Functionally, forms part of the ribosomal stalk, playing a central role in the interaction of the ribosome with GTP-bound translation factors. The chain is Large ribosomal subunit protein uL10 from Acidothermus cellulolyticus (strain ATCC 43068 / DSM 8971 / 11B).